Reading from the N-terminus, the 431-residue chain is Ornithine aminotransferase, mitochondrial (431 aa).

The residue at position 286 (lysine 286) is an N6-(pyridoxal phosphate)lysine.

Belongs to the class-III pyridoxal-phosphate-dependent aminotransferase family. Homotetramer. Requires pyridoxal 5'-phosphate as cofactor.

The protein resides in the mitochondrion matrix. It catalyses the reaction a 2-oxocarboxylate + L-ornithine = L-glutamate 5-semialdehyde + an L-alpha-amino acid. It participates in amino-acid biosynthesis; L-proline biosynthesis; L-glutamate 5-semialdehyde from L-ornithine: step 1/1. This Drosophila melanogaster (Fruit fly) protein is Ornithine aminotransferase, mitochondrial (Oat).